Consider the following 285-residue polypeptide: MEMO1 family protein Igni_0992 (285 aa).

Belongs to the MEMO1 family.

In Ignicoccus hospitalis (strain KIN4/I / DSM 18386 / JCM 14125), this protein is MEMO1 family protein Igni_0992.